Reading from the N-terminus, the 283-residue chain is Bifunctional protein FolD (283 aa).

NADP(+) is bound by residues 165 to 167 and Ser190; that span reads GRS.

This sequence belongs to the tetrahydrofolate dehydrogenase/cyclohydrolase family. As to quaternary structure, homodimer.

It carries out the reaction (6R)-5,10-methylene-5,6,7,8-tetrahydrofolate + NADP(+) = (6R)-5,10-methenyltetrahydrofolate + NADPH. The enzyme catalyses (6R)-5,10-methenyltetrahydrofolate + H2O = (6R)-10-formyltetrahydrofolate + H(+). The protein operates within one-carbon metabolism; tetrahydrofolate interconversion. Its function is as follows. Catalyzes the oxidation of 5,10-methylenetetrahydrofolate to 5,10-methenyltetrahydrofolate and then the hydrolysis of 5,10-methenyltetrahydrofolate to 10-formyltetrahydrofolate. This Paracidovorax citrulli (strain AAC00-1) (Acidovorax citrulli) protein is Bifunctional protein FolD.